Reading from the N-terminus, the 74-residue chain is MEKAEKYVKIGIDGYTYNLFKSEKDKWRKKTGRVLDNSDILLILVQRSRALECLENDKSKTVEECKKETALQNY.

This is an uncharacterized protein from Acidianus hospitalis (AFV-1).